Reading from the N-terminus, the 205-residue chain is MKSYTSLLAVAILCLFGGVNGACTKNAIAQTGFNKDKYFNGDVWYVTDYLDLEPDDVPKRYCAALAAGTASGKLKEALYHYDPKTQDTFYDVSELQVESLGKYTANFKKVDKNGNVKVAVTAGNYYTFTVMYADDSSALIHTCLHKGNKDLGDLYAVLNRNKDAAAGDKVKSAVSAATLEFSKFISTKENNCAYDNDSLKSLLTK.

A signal peptide spans 1–21 (MKSYTSLLAVAILCLFGGVNG). 2 disulfide bridges follow: Cys-23–Cys-143 and Cys-62–Cys-192. Heme is bound at residue His-80.

This sequence belongs to the calycin superfamily. Nitrophorin family. Heme b serves as cofactor. As to expression, salivary gland (at protein level).

The protein localises to the secreted. It carries out the reaction 3 nitrite + 2 H(+) = 2 nitric oxide + nitrate + H2O. Functionally, heme-based protein that delivers nitric oxide gas (NO) to the victim while feeding, resulting in vasodilation and inhibition of platelet aggregation. Reversibly binds nitric oxide (NO). Also binds tightly to histamine, which is released by the host to induce wound healing. NO release is pH dependent and linked to loop dynamics. The sequence is that of Nitrophorin-4 from Rhodnius prolixus (Triatomid bug).